The chain runs to 557 residues: Probable tRNA-splicing endonuclease subunit tsp-5 (557 aa).

Disordered stretches follow at residues 1-36 (MPLDDDLEDNPSLVPPPSTTTTSSNATGDAATMMDE), 131-152 (KLTKRGKEGAGEDDEEEKDRKL), 225-252 (SVPAAAAATTSAKGEGEQRTEEDEEDDD), 370-403 (PSSTSSSASPTADNQPQKPQSPESDESDSGSDSP), and 514-557 (SGGP…GRGN). Basic and acidic residues predominate over residues 131–140 (KLTKRGKEGA). Over residues 370–381 (PSSTSSSASPTA) the composition is skewed to low complexity. Gly residues-rich tracts occupy residues 517 to 527 (PRRGGGGGGKK) and 538 to 549 (GRGGGRGGGRGG).

It belongs to the SEN54 family. TRNA splicing endonuclease is a heterotetramer composed of tsp-2/sen2, tsp-1/sen15, tsp-4/sen34 and tsp-5/sen54. Interacts directly with tsp-2/sen2.

Non-catalytic subunit of the tRNA-splicing endonuclease complex, a complex responsible for identification and cleavage of the splice sites in pre-tRNA. It cleaves pre-tRNA at the 5' and 3' splice sites to release the intron. The products are an intron and two tRNA half-molecules bearing 2',3' cyclic phosphate and 5'-OH termini. There are no conserved sequences at the splice sites, but the intron is invariably located at the same site in the gene, placing the splice sites an invariant distance from the constant structural features of the tRNA body. May be required to embody the molecular ruler of the complex. In Neurospora crassa (strain ATCC 24698 / 74-OR23-1A / CBS 708.71 / DSM 1257 / FGSC 987), this protein is Probable tRNA-splicing endonuclease subunit tsp-5 (tsp-5).